The sequence spans 215 residues: Protein GET1 (215 aa).

The Lumenal portion of the chain corresponds to 1–4; it reads MINL. Residues 5 to 24 form a helical membrane-spanning segment; that stretch reads ALVIFLCTLLNQIVSWVGKS. Over 25–108 the chain is Cytoplasmic; that stretch reads VLQEIAFTAY…SFSKKFSTLL (84 aa). Residues 73 to 94 adopt a coiled-coil conformation; it reads AKLRRKLDKGLADLEKTNNTLS. A helical membrane pass occupies residues 109 to 129; that stretch reads WLMTTGAQFLLSWWFRKQPIF. Residues 130–153 lie on the Lumenal side of the membrane; sequence WLPEGWVPYPVAWLLSFPSAPIGS. Residues 154 to 170 traverse the membrane as a helical segment; the sequence is VSSGAWGAICRRVLSTL. Residues 171 to 215 are Cytoplasmic-facing; sequence QEIIQSLLAPSPAATGPVPTGPSSAKNDQPEAKIEALALEHEKLD. The segment at 182–202 is disordered; sequence PAATGPVPTGPSSAKNDQPEA.

This sequence belongs to the WRB/GET1 family. Interacts with GET3.

The protein resides in the endoplasmic reticulum membrane. Its function is as follows. Required for the post-translational delivery of tail-anchored (TA) proteins to the endoplasmic reticulum. Acts as a membrane receptor for soluble GET3, which recognizes and selectively binds the transmembrane domain of TA proteins in the cytosol. This is Protein GET1 from Cryptococcus neoformans var. neoformans serotype D (strain JEC21 / ATCC MYA-565) (Filobasidiella neoformans).